Consider the following 346-residue polypeptide: UDP-3-O-acylglucosamine N-acyltransferase (346 aa).

The Proton acceptor role is filled by His240.

It belongs to the transferase hexapeptide repeat family. LpxD subfamily. Homotrimer.

The catalysed reaction is a UDP-3-O-[(3R)-3-hydroxyacyl]-alpha-D-glucosamine + a (3R)-hydroxyacyl-[ACP] = a UDP-2-N,3-O-bis[(3R)-3-hydroxyacyl]-alpha-D-glucosamine + holo-[ACP] + H(+). It functions in the pathway bacterial outer membrane biogenesis; LPS lipid A biosynthesis. Its function is as follows. Catalyzes the N-acylation of UDP-3-O-acylglucosamine using 3-hydroxyacyl-ACP as the acyl donor. Is involved in the biosynthesis of lipid A, a phosphorylated glycolipid that anchors the lipopolysaccharide to the outer membrane of the cell. This is UDP-3-O-acylglucosamine N-acyltransferase from Bacteroides fragilis (strain ATCC 25285 / DSM 2151 / CCUG 4856 / JCM 11019 / LMG 10263 / NCTC 9343 / Onslow / VPI 2553 / EN-2).